The chain runs to 780 residues: Probable trehalase (780 aa).

A disordered region spans residues 1-48 (MVDFLPKVTEINPPSEGNDGEDNIKPLSSGSEQRPLKEEGQQGGRRHH). Residues Ser52 and Ser53 each carry the phosphoserine modification. Phosphothreonine is present on Thr88. Ser112 is subject to Phosphoserine. Residues Arg331, 338-339 (WD), Asn375, Arg384, 384-386 (RSQ), and Gly505 contribute to the substrate site. Catalysis depends on proton donor/acceptor residues Asp507 and Glu703.

It belongs to the glycosyl hydrolase 37 family.

It carries out the reaction alpha,alpha-trehalose + H2O = alpha-D-glucose + beta-D-glucose. In Saccharomyces cerevisiae (strain ATCC 204508 / S288c) (Baker's yeast), this protein is Probable trehalase (NTH2).